We begin with the raw amino-acid sequence, 261 residues long: Cytochrome c oxidase subunit 3 (261 aa).

At 1–15 (MAHQAHPYHMVDPSP) the chain is on the mitochondrial matrix side. A helical membrane pass occupies residues 16-34 (WPLTGATAALLMTSGLAIW). The Mitochondrial intermembrane segment spans residues 35–40 (FHFHSL). The chain crosses the membrane as a helical span at residues 41-66 (LLLYLGLTLLLLTMIQWWRDIIREGT). Topologically, residues 67–72 (FQGHHT) are mitochondrial matrix. Residues 73-105 (PPVQKGLRYGMILFIVSEVFFFLGFFWAFYHSS) traverse the membrane as a helical segment. At 106-128 (LAPTPELGGCWPPTGINPLDPFE) the chain is on the mitochondrial intermembrane side. Residues 129–152 (VPLLNTAVLLASGVTVTWAHHGLM) traverse the membrane as a helical segment. Over 153 to 155 (EGN) the chain is Mitochondrial matrix. The chain crosses the membrane as a helical span at residues 156 to 183 (RKEAIQALTLTIILGVYFTALQAMEYYE). Residues 184 to 190 (APFTIAD) lie on the Mitochondrial intermembrane side of the membrane. Residues 191–223 (GVYGTTFFVATGFHGLHVIIGSTFLAVCLLRQV) traverse the membrane as a helical segment. Residues 224-232 (LYHFTSEHH) lie on the Mitochondrial matrix side of the membrane. A helical transmembrane segment spans residues 233 to 256 (FGFEAAAWYWHFVDVVWLFLYVSI). The Mitochondrial intermembrane segment spans residues 257–261 (YWWGS).

It belongs to the cytochrome c oxidase subunit 3 family. In terms of assembly, component of the cytochrome c oxidase (complex IV, CIV), a multisubunit enzyme composed of 14 subunits. The complex is composed of a catalytic core of 3 subunits MT-CO1, MT-CO2 and MT-CO3, encoded in the mitochondrial DNA, and 11 supernumerary subunits COX4I, COX5A, COX5B, COX6A, COX6B, COX6C, COX7A, COX7B, COX7C, COX8 and NDUFA4, which are encoded in the nuclear genome. The complex exists as a monomer or a dimer and forms supercomplexes (SCs) in the inner mitochondrial membrane with NADH-ubiquinone oxidoreductase (complex I, CI) and ubiquinol-cytochrome c oxidoreductase (cytochrome b-c1 complex, complex III, CIII), resulting in different assemblies (supercomplex SCI(1)III(2)IV(1) and megacomplex MCI(2)III(2)IV(2)).

It localises to the mitochondrion inner membrane. It carries out the reaction 4 Fe(II)-[cytochrome c] + O2 + 8 H(+)(in) = 4 Fe(III)-[cytochrome c] + 2 H2O + 4 H(+)(out). In terms of biological role, component of the cytochrome c oxidase, the last enzyme in the mitochondrial electron transport chain which drives oxidative phosphorylation. The respiratory chain contains 3 multisubunit complexes succinate dehydrogenase (complex II, CII), ubiquinol-cytochrome c oxidoreductase (cytochrome b-c1 complex, complex III, CIII) and cytochrome c oxidase (complex IV, CIV), that cooperate to transfer electrons derived from NADH and succinate to molecular oxygen, creating an electrochemical gradient over the inner membrane that drives transmembrane transport and the ATP synthase. Cytochrome c oxidase is the component of the respiratory chain that catalyzes the reduction of oxygen to water. Electrons originating from reduced cytochrome c in the intermembrane space (IMS) are transferred via the dinuclear copper A center (CU(A)) of subunit 2 and heme A of subunit 1 to the active site in subunit 1, a binuclear center (BNC) formed by heme A3 and copper B (CU(B)). The BNC reduces molecular oxygen to 2 water molecules using 4 electrons from cytochrome c in the IMS and 4 protons from the mitochondrial matrix. This chain is Cytochrome c oxidase subunit 3 (MT-CO3), found in Scyliorhinus canicula (Small-spotted catshark).